A 329-amino-acid chain; its full sequence is Lipoyl synthase (329 aa).

The [4Fe-4S] cluster site is built by Cys-72, Cys-77, Cys-83, Cys-98, Cys-102, Cys-105, and Ser-313. In terms of domain architecture, Radical SAM core spans 83-303 (CWSHGTATIM…QIGLKKGFFE (221 aa)).

Belongs to the radical SAM superfamily. Lipoyl synthase family. Requires [4Fe-4S] cluster as cofactor.

The protein localises to the cytoplasm. The catalysed reaction is [[Fe-S] cluster scaffold protein carrying a second [4Fe-4S](2+) cluster] + N(6)-octanoyl-L-lysyl-[protein] + 2 oxidized [2Fe-2S]-[ferredoxin] + 2 S-adenosyl-L-methionine + 4 H(+) = [[Fe-S] cluster scaffold protein] + N(6)-[(R)-dihydrolipoyl]-L-lysyl-[protein] + 4 Fe(3+) + 2 hydrogen sulfide + 2 5'-deoxyadenosine + 2 L-methionine + 2 reduced [2Fe-2S]-[ferredoxin]. It participates in protein modification; protein lipoylation via endogenous pathway; protein N(6)-(lipoyl)lysine from octanoyl-[acyl-carrier-protein]: step 2/2. In terms of biological role, catalyzes the radical-mediated insertion of two sulfur atoms into the C-6 and C-8 positions of the octanoyl moiety bound to the lipoyl domains of lipoate-dependent enzymes, thereby converting the octanoylated domains into lipoylated derivatives. This Legionella pneumophila (strain Paris) protein is Lipoyl synthase.